The sequence spans 330 residues: Ribosomal RNA small subunit methyltransferase C (330 aa).

This sequence belongs to the methyltransferase superfamily. RsmC family. Monomer.

The protein resides in the cytoplasm. The catalysed reaction is guanosine(1207) in 16S rRNA + S-adenosyl-L-methionine = N(2)-methylguanosine(1207) in 16S rRNA + S-adenosyl-L-homocysteine + H(+). In terms of biological role, specifically methylates the guanine in position 1207 of 16S rRNA in the 30S particle. The chain is Ribosomal RNA small subunit methyltransferase C from Haemophilus influenzae (strain ATCC 51907 / DSM 11121 / KW20 / Rd).